The chain runs to 219 residues: Thiamine-phosphate synthase (219 aa).

Residues Gln48 to Lys52 and Asn80 contribute to the 4-amino-2-methyl-5-(diphosphooxymethyl)pyrimidine site. Asp81 and Asp100 together coordinate Mg(2+). Residue Ser119 participates in 4-amino-2-methyl-5-(diphosphooxymethyl)pyrimidine binding. A 2-[(2R,5Z)-2-carboxy-4-methylthiazol-5(2H)-ylidene]ethyl phosphate-binding site is contributed by Thr145–Thr147. Lys148 contacts 4-amino-2-methyl-5-(diphosphooxymethyl)pyrimidine. 2-[(2R,5Z)-2-carboxy-4-methylthiazol-5(2H)-ylidene]ethyl phosphate contacts are provided by residues Gly176 and Val196–Ser197.

The protein belongs to the thiamine-phosphate synthase family. It depends on Mg(2+) as a cofactor.

It carries out the reaction 2-[(2R,5Z)-2-carboxy-4-methylthiazol-5(2H)-ylidene]ethyl phosphate + 4-amino-2-methyl-5-(diphosphooxymethyl)pyrimidine + 2 H(+) = thiamine phosphate + CO2 + diphosphate. The enzyme catalyses 2-(2-carboxy-4-methylthiazol-5-yl)ethyl phosphate + 4-amino-2-methyl-5-(diphosphooxymethyl)pyrimidine + 2 H(+) = thiamine phosphate + CO2 + diphosphate. The catalysed reaction is 4-methyl-5-(2-phosphooxyethyl)-thiazole + 4-amino-2-methyl-5-(diphosphooxymethyl)pyrimidine + H(+) = thiamine phosphate + diphosphate. The protein operates within cofactor biosynthesis; thiamine diphosphate biosynthesis; thiamine phosphate from 4-amino-2-methyl-5-diphosphomethylpyrimidine and 4-methyl-5-(2-phosphoethyl)-thiazole: step 1/1. Functionally, condenses 4-methyl-5-(beta-hydroxyethyl)thiazole monophosphate (THZ-P) and 2-methyl-4-amino-5-hydroxymethyl pyrimidine pyrophosphate (HMP-PP) to form thiamine monophosphate (TMP). The chain is Thiamine-phosphate synthase from Albidiferax ferrireducens (strain ATCC BAA-621 / DSM 15236 / T118) (Rhodoferax ferrireducens).